The sequence spans 586 residues: Heterogeneous nuclear ribonucleoprotein L (586 aa).

Over residues 1–16 the composition is skewed to basic residues; that stretch reads MSRRLLPRAEKRRRRL. The segment at 1 to 97 is disordered; that stretch reads MSRRLLPRAE…NYDDPHKTPA (97 aa). Residues 17 to 27 show a composition bias toward basic and acidic residues; it reads EQRQQPDEQLR. A compositionally biased stretch (low complexity) spans 28-37; it reads RAGAMVKMAA. Gly residues predominate over residues 38–54; it reads AGGGGGGGRYYGGGNEG. Glycyl lysine isopeptide (Lys-Gly) (interchain with G-Cter in SUMO2) cross-links involve residues lysine 59 and lysine 62. The span at 69–87 shows a compositional bias: gly residues; the sequence is QHGGGGGGGSGAAGGGGGE. At serine 98 the chain carries Phosphoserine. The RRM 1 domain maps to 99-173; that stretch reads PVVHIRGLID…HPAFVNYSTS (75 aa). Lysine 133 is covalently cross-linked (Glycyl lysine isopeptide (Lys-Gly) (interchain with G-Cter in SUMO2)). At serine 182 the chain carries Phosphoserine. The 78-residue stretch at 190 to 267 folds into the RRM 2 domain; sequence SVLLFTILNP…CTLKIEYAKP (78 aa). Lysine 266 is subject to N6-acetyllysine. A compositionally biased stretch (polar residues) spans 281–298; the sequence is DYTNPNLSGQGDPGSNPN. The segment at 281–376 is disordered; the sequence is DYTNPNLSGQ…PPPPDYGPHA (96 aa). Residues serine 288 and serine 295 each carry the phosphoserine modification. Lysine 299 is covalently cross-linked (Glycyl lysine isopeptide (Lys-Gly) (interchain with G-Cter in SUMO2)). Arginine 351 and arginine 355 each carry asymmetric dimethylarginine. Positions 361–372 are enriched in pro residues; that stretch reads GHPPPPPPPPDY. Residue serine 378 is modified to Phosphoserine. RRM domains lie at 379-476 and 492-580; these read PVLM…DFSE and RIQH…LCFS. Position 541 is a phosphoserine; by CaMK4 (serine 541). Lysine 565 is covalently cross-linked (Glycyl lysine isopeptide (Lys-Gly) (interchain with G-Cter in SUMO2)).

In terms of assembly, identified in a IGF2BP1-dependent mRNP granule complex containing untranslated mRNAs. Interacts with HNRNPLL. Interacts with APEX1; the interaction is DNA-dependent. Component of a complex with SETD2. Interacts with ELAVL1. Part of a transcription inhibitory ribonucleoprotein complex composed at least of the circular RNA circZNF827, ZNF827 and HNRNPK. Interacts with CHD8 in an RNA-dependent manner. Phosphorylation at Ser-541 by CaMK4 enhances interaction with a CaMK4-responsive RNA element (CaRRE1), and prevents inclusion of the stress axis-regulated exon (STREX) of the KCNMA1 potassium channel transcripts upon membrane depolarization. In terms of tissue distribution, detected in hematopoietic cells, including lymphoid progenitor cells.

The protein localises to the nucleus. It localises to the nucleoplasm. The protein resides in the cytoplasm. In terms of biological role, splicing factor binding to exonic or intronic sites and acting as either an activator or repressor of exon inclusion. Exhibits a binding preference for CA-rich elements. Component of the heterogeneous nuclear ribonucleoprotein (hnRNP) complexes and associated with most nascent transcripts. Associates, together with APEX1, to the negative calcium responsive element (nCaRE) B2 of the APEX2 promoter. As part of a ribonucleoprotein complex composed at least of ZNF827, HNRNPK and the circular RNA circZNF827 that nucleates the complex on chromatin, may negatively regulate the transcription of genes involved in neuronal differentiation. Regulates alternative splicing of a core group of genes involved in neuronal differentiation, likely by mediating H3K36me3-coupled transcription elongation and co-transcriptional RNA processing via interaction with CHD8. The chain is Heterogeneous nuclear ribonucleoprotein L (Hnrnpl) from Mus musculus (Mouse).